Consider the following 463-residue polypeptide: ATP-dependent protease ATPase subunit HslU (463 aa).

Residues isoleucine 19, 61–66, aspartate 277, glutamate 341, and arginine 413 each bind ATP; that span reads GVGKTE.

Belongs to the ClpX chaperone family. HslU subfamily. A double ring-shaped homohexamer of HslV is capped on each side by a ring-shaped HslU homohexamer. The assembly of the HslU/HslV complex is dependent on binding of ATP.

It localises to the cytoplasm. Its function is as follows. ATPase subunit of a proteasome-like degradation complex; this subunit has chaperone activity. The binding of ATP and its subsequent hydrolysis by HslU are essential for unfolding of protein substrates subsequently hydrolyzed by HslV. HslU recognizes the N-terminal part of its protein substrates and unfolds these before they are guided to HslV for hydrolysis. This is ATP-dependent protease ATPase subunit HslU from Bacillus cereus (strain B4264).